Reading from the N-terminus, the 766-residue chain is MKEKSKNAARTRREKENSEFYELAKLLPLPSAITSQLDKASIIRLTTSYLKMRVVFPEGLGEAWGHSSRTSPLDNVGRELGSHLLQTLDGFIFVVAPDGKIMYISETASVHLGLSQVELTGNSIYEYIHPADHDEMTAVLTAHQPYHSHFVQEYEIERSFFLRMKCVLAKRNAGLTCGGYKVIHCSGYLKIRQYSLDMSPFDGCYQNVGLVAVGHSLPPSAVTEIKLHSNMFMFRASLDMKLIFLDSRVAELTGYEPQDLIEKTLYHHVHGCDTFHLRCAHHLLLVKGQVTTKYYRFLAKHGGWVWVQSYATIVHNSRSSRPHCIVSVNYVLTDTEYKGLQLSLDQISASKPAFSYTSSSTPTMTDNRKGAKSRLSSSKSKSRTSPYPQYSGFHTERSESDHDSQWGGSPLTDTASPQLLDPADRPGSQHDASCAYRQFSDRSSLCYGFALDHSRLVEERHFHTQACEGGRCEAGRYFLGTPQAGREPWWGSRAALPLTKASPESREAYENSMPHIASVHRIHGRGHWDEDSVVSSPDPGSASESGDRYRTEQYQSSPHEPSKIETLIRATQQMIKEEENRLQLRKAPSDQLASINGAGKKHSLCFANYQQPPPTGEVCHGSALANTSPCDHIQQREGKMLSPHENDYDNSPTALSRISSPNSDRISKSSLILAKDYLHSDISPHQTAGDHPTVSPNCFGSHRQYFDKHAYTLTGYALEHLYDSETIRNYSLGCNGSHFDVTSHLRMQPDPAQGHKGTSVIITNGS.

Residues M1–R53 enclose the bHLH domain. 2 consecutive PAS domains span residues G77–H147 and P218–G288. Residues T292–T335 form the PAC domain. Residues E336 to S766 enclose the Single-minded C-terminal domain. Residues A353–T365 show a composition bias toward polar residues. 2 disordered regions span residues A353–D431 and W528–K563. A Nuclear localization signal motif is present at residues R368–Y387. The span at S373–S385 shows a compositional bias: low complexity. Residues H394–S404 are compositionally biased toward basic and acidic residues.

In terms of assembly, efficient DNA binding requires dimerization with another bHLH protein. Heterodimer; forms a heterodimer with ARNT, ARNT2.

It localises to the nucleus. Transcriptional factor that may have pleiotropic effects during embryogenesis and in the adult. This Homo sapiens (Human) protein is Single-minded homolog 1 (SIM1).